The chain runs to 259 residues: Diaminopimelate epimerase (259 aa).

Residues N14, Q42, and N60 each contribute to the substrate site. The active-site Proton donor is C69. Substrate contacts are provided by residues 70–71, N151, N184, and 202–203; these read GN and ER. Residue C211 is the Proton acceptor of the active site. 212-213 contacts substrate; sequence GS.

The protein belongs to the diaminopimelate epimerase family. In terms of assembly, homodimer.

The protein localises to the cytoplasm. The enzyme catalyses (2S,6S)-2,6-diaminopimelate = meso-2,6-diaminopimelate. It functions in the pathway amino-acid biosynthesis; L-lysine biosynthesis via DAP pathway; DL-2,6-diaminopimelate from LL-2,6-diaminopimelate: step 1/1. Its function is as follows. Catalyzes the stereoinversion of LL-2,6-diaminopimelate (L,L-DAP) to meso-diaminopimelate (meso-DAP), a precursor of L-lysine and an essential component of the bacterial peptidoglycan. The sequence is that of Diaminopimelate epimerase from Wolbachia sp. subsp. Brugia malayi (strain TRS).